The primary structure comprises 67 residues: uncharacterized protein (67 aa).

This is an uncharacterized protein from Lymantria dispar multicapsid nuclear polyhedrosis virus (LdMNPV).